Reading from the N-terminus, the 882-residue chain is Translation initiation factor IF-2 (882 aa).

Disordered regions lie at residues 95-176 (PSVT…ASSL) and 229-289 (EHAR…SALQ). Positions 116-133 (TKNTFSQESLNKTSPQKS) are enriched in polar residues. Basic and acidic residues-rich tracts occupy residues 137-172 (KAIE…REAE) and 229-246 (EHAR…EGDR). Basic residues predominate over residues 247–262 (RSRHRGTKTTKQKKTN). Residues 263–276 (KLSESKTDREEARA) are compositionally biased toward basic and acidic residues. Residues 382–551 (HRAPVVTIMG…LLQAEVLELK (170 aa)) enclose the tr-type G domain. The segment at 391–398 (GHVDHGKT) is G1. 391-398 (GHVDHGKT) serves as a coordination point for GTP. Positions 416 to 420 (GITQH) are G2. The tract at residues 437–440 (DTPG) is G3. GTP-binding positions include 437 to 441 (DTPGH) and 491 to 494 (NKID). The tract at residues 491-494 (NKID) is G4. Residues 527–529 (SAK) are G5.

The protein belongs to the TRAFAC class translation factor GTPase superfamily. Classic translation factor GTPase family. IF-2 subfamily.

The protein localises to the cytoplasm. Its function is as follows. One of the essential components for the initiation of protein synthesis. Protects formylmethionyl-tRNA from spontaneous hydrolysis and promotes its binding to the 30S ribosomal subunits. Also involved in the hydrolysis of GTP during the formation of the 70S ribosomal complex. The chain is Translation initiation factor IF-2 from Hamiltonella defensa subsp. Acyrthosiphon pisum (strain 5AT).